Here is a 139-residue protein sequence, read N- to C-terminus: Protein shisa-5 (139 aa).

A helical transmembrane segment spans residues 3-23; it reads FGTLVAIGVIVFAVVVITIIL.

This sequence belongs to the shisa family.

Its subcellular location is the endoplasmic reticulum membrane. It is found in the nucleus membrane. Its function is as follows. Can induce apoptosis in a caspase-dependent manner and plays a role in p53/TP53-dependent apoptosis. This chain is Protein shisa-5 (Shisa5), found in Gallus gallus (Chicken).